The following is a 456-amino-acid chain: Armadillo repeat-containing X-linked protein 1 (456 aa).

Topologically, residues 1 to 6 (MGRTRE) are mitochondrial intermembrane. Mitochondrion outer membrane (MOM)-targeting sequence stretches follow at residues 1–6 (MGRTRE) and 26–36 (RLTWGKDENEK). The chain crosses the membrane as a helical; Signal-anchor span at residues 7–29 (AGCVAAGMVIGAGACYCVYRLTW). At 30–456 (GKDENEKLWD…VKVLKVLTKL (427 aa)) the chain is on the cytoplasmic side. Disordered stretches follow at residues 37 to 106 (LWDE…SGGG) and 139 to 186 (RTLT…APAT). Residues 38-50 (WDEEEEEEEEEEE) are compositionally biased toward acidic residues. Composition is skewed to basic and acidic residues over residues 51-62 (KSCSDKTEKELK) and 72-81 (KPQDDSKSKV). Basic residues predominate over residues 162-180 (SRARNRTSGKVKRKNRSKS). 4 ARM repeats span residues 198–238 (PYKI…NNAA), 240–279 (SFNQ…NLSV), 361–401 (PAMT…NIND), and 418–456 (SSLF…LTKL).

It belongs to the eutherian X-chromosome-specific Armcx family. In terms of assembly, interacts with MIRO1. In terms of tissue distribution, widely expressed in the adult nervous tissue, especially in the forebrain, including the cerebral cortex, hippocampus and thalamus.

It is found in the mitochondrion. The protein resides in the mitochondrion outer membrane. In terms of biological role, regulates mitochondrial transport during axon regeneration. Increases the proportion of motile mitochondria by recruiting stationary mitochondria into the motile pool. Enhances mitochondria movement and neurite growth in both adult axons and embryonic neurons. Promotes neuronal survival and axon regeneration after nerve injury. May link mitochondria to the Trak1-kinesin motor complex via its interaction with Miro1. This chain is Armadillo repeat-containing X-linked protein 1 (Armcx1), found in Mus musculus (Mouse).